Consider the following 340-residue polypeptide: Undecaprenyl-phosphate 4-deoxy-4-formamido-L-arabinose transferase (340 aa).

2 consecutive transmembrane segments (helical) span residues 235 to 255 (LSIVGFAMAGLGVLFAAALIF) and 269 to 289 (LFVLFAVLFVFTGGQFIGMGL).

It belongs to the glycosyltransferase 2 family.

The protein localises to the cell inner membrane. It catalyses the reaction UDP-4-deoxy-4-formamido-beta-L-arabinose + di-trans,octa-cis-undecaprenyl phosphate = 4-deoxy-4-formamido-alpha-L-arabinopyranosyl di-trans,octa-cis-undecaprenyl phosphate + UDP. The protein operates within glycolipid biosynthesis; 4-amino-4-deoxy-alpha-L-arabinose undecaprenyl phosphate biosynthesis; 4-amino-4-deoxy-alpha-L-arabinose undecaprenyl phosphate from UDP-4-deoxy-4-formamido-beta-L-arabinose and undecaprenyl phosphate: step 1/2. It functions in the pathway bacterial outer membrane biogenesis; lipopolysaccharide biosynthesis. Functionally, catalyzes the transfer of 4-deoxy-4-formamido-L-arabinose from UDP to undecaprenyl phosphate. The modified arabinose is attached to lipid A and is required for resistance to polymyxin and cationic antimicrobial peptides. This Pseudomonas fluorescens (strain Pf0-1) protein is Undecaprenyl-phosphate 4-deoxy-4-formamido-L-arabinose transferase.